The following is a 174-amino-acid chain: MKEDAGNPLHLTSLNHVSVLCRSVDESMNFYQKVLGFIPIRRPESLNFEGAWLFGHGIGIHLLCAPEPEKLPKKTAINPKDNHISFQCESMGVVEKKLEEMGIDYVRALVEEGGIQVDQLFFHDPDGFMIEICNCDSLPVVPLVGEMARSCSRVKLHQMVQPQPQTQIHQVVYP.

A VOC domain is found at 13 to 135 (SLNHVSVLCR…DGFMIEICNC (123 aa)). Residue Glu-131 is the Proton donor/acceptor of the active site.

The protein belongs to the glyoxalase I family. In terms of tissue distribution, mostly expressed in roots, and, to a lower extent, in leaves, flowers, seeds and siliques.

Its subcellular location is the cell membrane. The protein resides in the cytoplasm. Involved in the detoxification and scavenging of methylglyoxal (MG), a cytotoxic aldehyde produced in response to primary metabolism alteration observed during biotic and abiotic stresses. Modulates cross-talk between salicylic acid (SA) and jasmonic acid (JA) signaling pathways during defense responses to pathogens such as Botrytis cinerea. The protein is Glyoxylase I 4 of Arabidopsis thaliana (Mouse-ear cress).